The sequence spans 545 residues: Eukaryotic translation initiation factor 3 subunit D-2 (545 aa).

Residues 99 to 113 (FRGNIRNNPRTRGRT) show a composition bias toward basic residues. Residues 99–158 (FRGNIRNNPRTRGRTGRGGAVTGIGGNQPGVGVNERTKYGKGRDNRRQMGRRFGRNAPTR) are disordered. The span at 114 to 127 (GRGGAVTGIGGNQP) shows a compositional bias: gly residues. Positions 133–145 (ERTKYGKGRDNRR) are enriched in basic and acidic residues. The segment at 287–301 (QFDLLTVNETALEPP) is RNA gate.

The protein belongs to the eIF-3 subunit D family. Component of the eukaryotic translation initiation factor 3 (eIF-3) complex. The eIF-3 complex interacts with pix.

The protein localises to the cytoplasm. MRNA cap-binding component of the eukaryotic translation initiation factor 3 (eIF-3) complex, which is involved in protein synthesis of a specialized repertoire of mRNAs and, together with other initiation factors, stimulates binding of mRNA and methionyl-tRNAi to the 40S ribosome. The eIF-3 complex specifically targets and initiates translation of a subset of mRNAs involved in cell proliferation. In the eIF-3 complex, eif3d specifically recognizes and binds the 7-methylguanosine cap of a subset of mRNAs. This Drosophila persimilis (Fruit fly) protein is Eukaryotic translation initiation factor 3 subunit D-2.